Reading from the N-terminus, the 141-residue chain is Large ribosomal subunit protein uL11 (141 aa).

The protein belongs to the universal ribosomal protein uL11 family. As to quaternary structure, part of the ribosomal stalk of the 50S ribosomal subunit. Interacts with L10 and the large rRNA to form the base of the stalk. L10 forms an elongated spine to which L12 dimers bind in a sequential fashion forming a multimeric L10(L12)X complex. In terms of processing, one or more lysine residues are methylated.

Its function is as follows. Forms part of the ribosomal stalk which helps the ribosome interact with GTP-bound translation factors. The chain is Large ribosomal subunit protein uL11 from Shouchella clausii (strain KSM-K16) (Alkalihalobacillus clausii).